The sequence spans 152 residues: Large ribosomal subunit protein bL9 (152 aa).

This sequence belongs to the bacterial ribosomal protein bL9 family.

Its function is as follows. Binds to the 23S rRNA. This Nostoc punctiforme (strain ATCC 29133 / PCC 73102) protein is Large ribosomal subunit protein bL9.